The following is a 293-amino-acid chain: AA9 family lytic polysaccharide monooxygenase E (293 aa).

A signal peptide spans 1–19 (MKGLLSVAALSLAVSEVSA). Residues histidine 20 and histidine 90 each coordinate Cu(2+). A disulfide bond links cysteine 59 and cysteine 172. Positions 158 and 167 each coordinate O2. Tyrosine 169 provides a ligand contact to Cu(2+). A CBM1 domain is found at 257–293 (CAVAKWGQCGGNGWTGCTTCAAGSTCNTQNAYYHQCV).

The protein belongs to the polysaccharide monooxygenase AA9 family. It depends on Cu(2+) as a cofactor.

Its subcellular location is the secreted. The enzyme catalyses [(1-&gt;4)-beta-D-glucosyl]n+m + reduced acceptor + O2 = 4-dehydro-beta-D-glucosyl-[(1-&gt;4)-beta-D-glucosyl]n-1 + [(1-&gt;4)-beta-D-glucosyl]m + acceptor + H2O.. Its activity is regulated as follows. Glucose dehydrogenase and aryl-alcohol quinone oxidoreductases regulate the oxidative degradation of cellulose since they can act as catalytically efficient electron donors for LPMO9E. In terms of biological role, lytic polysaccharide monooxygenase (LPMO) that depolymerizes crystalline and amorphous polysaccharides via the oxidation of scissile alpha- or beta-(1-4)-glycosidic bonds, yielding only C1 oxidation products. Catalysis by LPMOs requires the reduction of the active-site copper from Cu(II) to Cu(I) by a reducing agent and H(2)O(2) or O(2) as a cosubstrate. Improves the progression of lytic enzymes in delignified miscanthus cell walls. This boosting effect dependents on the cellular type which indicates contrasted recalcitrance levels in plant tissues. The chain is AA9 family lytic polysaccharide monooxygenase E from Podospora anserina (strain S / ATCC MYA-4624 / DSM 980 / FGSC 10383) (Pleurage anserina).